The sequence spans 116 residues: MSSSKGDEEINSNNEEMLGIDKLSVDYDYLLYKINDYVNSIQIQTKEVCQRQNELISQNVVEDIVDVNIQSFKDILSKCEELENYFTMLDQIEMISDTFHGRIDDVLKEYRKLNGN.

Residues 63 to 95 (DIVDVNIQSFKDILSKCEELENYFTMLDQIEMI) are a coiled coil.

This sequence belongs to the BLOC1S4 family. Component of the biogenesis of lysosome-related organelles complex-1 (BLOC-1).

It is found in the cytoplasm. Functionally, component of the biogenesis of lysosome-related organelles complex-1 (BLOC-1), a complex that is involved in endosomal cargo sorting. The sequence is that of Biogenesis of lysosome-related organelles complex 1 subunit CNL1 (CLN1) from Vanderwaltozyma polyspora (strain ATCC 22028 / DSM 70294 / BCRC 21397 / CBS 2163 / NBRC 10782 / NRRL Y-8283 / UCD 57-17) (Kluyveromyces polysporus).